We begin with the raw amino-acid sequence, 395 residues long: Protein UNIFOLIATA (395 aa).

Disordered regions lie at residues 147–170 and 185–223; these read SQEGLSEEPVVQREKEAMGSGGGS and QIRRRRMKMKGNDHGENEEGEEEEEDNISGGGVGGGERQ. Residues 202–211 show a composition bias toward acidic residues; it reads EEGEEEEEDN. 3 consecutive DNA-binding regions follow at residues 224-228, 293-300, and 364-367; these read REHPF, NKPKMRHY, and YGPT.

It belongs to the FLO/LFY family. As to expression, highly expressed in leaf, leaflet, inflorescence and lateral shoot primordia on the main shoot axis, and in floral organ and carpel primordia.

It localises to the nucleus. Its function is as follows. May regulate indeterminacy during leaf and flower development. In Pisum sativum (Garden pea), this protein is Protein UNIFOLIATA (UNI).